Consider the following 271-residue polypeptide: Small ribosomal subunit protein uS2 (271 aa).

Basic and acidic residues predominate over residues 229-242 (KERKGKDAEEELKK). Residues 229–271 (KERKGKDAEEELKKAAAPKAAPAAEAAPAAEAPAAPVVEAAAE) form a disordered region. Over residues 243 to 271 (AAAPKAAPAAEAAPAAEAPAAPVVEAAAE) the composition is skewed to low complexity.

It belongs to the universal ribosomal protein uS2 family.

The chain is Small ribosomal subunit protein uS2 from Nitratidesulfovibrio vulgaris (strain DSM 19637 / Miyazaki F) (Desulfovibrio vulgaris).